The following is a 146-amino-acid chain: Ribonuclease H (146 aa).

Positions 4 to 145 constitute an RNase H type-1 domain; sequence ELNKVVIYTD…ADILARSQIS (142 aa). Residues aspartate 13, glutamate 51, aspartate 73, and aspartate 137 each coordinate Mg(2+).

It belongs to the RNase H family. Monomer. Mg(2+) serves as cofactor.

It localises to the cytoplasm. The catalysed reaction is Endonucleolytic cleavage to 5'-phosphomonoester.. In terms of biological role, endonuclease that specifically degrades the RNA of RNA-DNA hybrids. This is Ribonuclease H from Ehrlichia canis (strain Jake).